A 40-amino-acid polypeptide reads, in one-letter code: U2-myrmicitoxin-Tb1a (40 aa).

The signal sequence occupies residues 1-3 (AEA). Residues 4-29 (MAEAMADAMADAMADAMADAMAEAAA) constitute a propeptide that is removed on maturation. Arginine 39 bears the Arginine amide mark.

Belongs to the formicidae venom precursor-01 superfamily. As to expression, expressed by the venom gland.

The protein localises to the secreted. In terms of biological role, venom protein with unknown function. Does not induce paralysis when a high dose is administered by intrathoracic injection into the blowfly Lucilia caesar. The polypeptide is U2-myrmicitoxin-Tb1a (Tetramorium bicarinatum (Tramp ant)).